An 81-amino-acid chain; its full sequence is Short neurotoxin B (81 aa).

Residues 1–21 (MKTLLLTLVVVTIVCLDLGYT) form the signal peptide. 4 cysteine pairs are disulfide-bonded: Cys-24–Cys-43, Cys-38–Cys-60, Cys-62–Cys-73, and Cys-74–Cys-79.

Belongs to the three-finger toxin family. Short-chain subfamily. Type I alpha-neurotoxin sub-subfamily. In terms of tissue distribution, expressed by the venom gland.

Its subcellular location is the secreted. Functionally, binds to muscle nicotinic acetylcholine receptor (nAChR) and inhibit acetylcholine from binding to the receptor, thereby impairing neuromuscular transmission. The chain is Short neurotoxin B from Aipysurus laevis (Olive sea snake).